The chain runs to 710 residues: Proline-rich receptor-like protein kinase PERK13 (710 aa).

Residues 1–229 (MSDSPTSSPP…SVPPPANSGG (229 aa)) form a disordered region. Topologically, residues 1–235 (MSDSPTSSPP…NSGGGYQGKT (235 aa)) are extracellular. Composition is skewed to pro residues over residues 7-21 (SSPP…PPPD), 29-130 (APPP…PPPP), 137-151 (PPAP…PPAS), and 168-188 (ATSP…PNAP). The N-linked (GlcNAc...) asparagine glycan is linked to N191. Residues 209 to 220 (SPSRGVPSSGNS) show a composition bias toward low complexity. The helical transmembrane segment at 236–256 (MAGFAIAGFAVIALMAVVFLV) threads the bilayer. The Cytoplasmic portion of the chain corresponds to 257 to 710 (RRKKKRNIDA…ENRNFNNRRY (454 aa)). Residues 289–334 (QNPTKGYSGPGGYNSQQQSNSGNSFGSQRGGGGYTRSGSAPDSAVM) form a disordered region. Low complexity predominate over residues 301 to 315 (YNSQQQSNSGNSFGS). T342 carries the phosphothreonine modification. One can recognise a Protein kinase domain in the interval 353-619 (FSKHNILGEG…RHSGPKRPRM (267 aa)). ATP-binding positions include 359–367 (LGEGGFGCV) and K381. Y426 bears the Phosphotyrosine mark. D477 functions as the Proton acceptor in the catalytic mechanism. At S510 the chain carries Phosphoserine. Residues T511 and T516 each carry the phosphothreonine modification. Y524 bears the Phosphotyrosine mark. The interval 676-710 (SGDYSVQDSRKGSNGASSEFTRNETENRNFNNRRY) is disordered.

Belongs to the protein kinase superfamily. Ser/Thr protein kinase family. Interacts with KIPK1 and KIPK2 (via its cytosolic domain). Mostly expressed in roots, especially in root hairs.

It localises to the cell membrane. The catalysed reaction is L-seryl-[protein] + ATP = O-phospho-L-seryl-[protein] + ADP + H(+). It carries out the reaction L-threonyl-[protein] + ATP = O-phospho-L-threonyl-[protein] + ADP + H(+). In terms of biological role, negatively regulates root hair elongation. The protein is Proline-rich receptor-like protein kinase PERK13 (PERK13) of Arabidopsis thaliana (Mouse-ear cress).